The following is a 788-amino-acid chain: Pre-rRNA-processing protein TSR1 homolog (788 aa).

Residues 1-40 (MSTTGHRAGVFKKPAKPHKSWKGKRTKGEITTENRGREGV) form a disordered region. Basic residues predominate over residues 9 to 25 (GVFKKPAKPHKSWKGKR). A compositionally biased stretch (basic and acidic residues) spans 26–40 (TKGEITTENRGREGV). The Bms1-type G domain occupies 83–243 (APCLVTILSL…LRTLNETKKK (161 aa)). Residues 354-433 (LEEADKEMRR…ASEMMFHDEI (80 aa)) are disordered. Residues 378–412 (DDSEDDEDEEDEDEDMDDEEEDKDLEEDDEEEDTP) show a composition bias toward acidic residues.

This sequence belongs to the TRAFAC class translation factor GTPase superfamily. Bms1-like GTPase family. TSR1 subfamily.

The protein localises to the nucleus. It is found in the nucleolus. Required during maturation of the 40S ribosomal subunit in the nucleolus. In Caenorhabditis briggsae, this protein is Pre-rRNA-processing protein TSR1 homolog.